The primary structure comprises 510 residues: Glycerol kinase (510 aa).

Thr-13 contributes to the ADP binding site. ATP-binding residues include Thr-13 and Thr-14. Thr-13 lines the sn-glycerol 3-phosphate pocket. Arg-17 is a binding site for ADP. Sn-glycerol 3-phosphate-binding residues include Arg-83, Glu-84, Tyr-135, and Asp-255. Positions 83, 84, 135, 255, and 256 each coordinate glycerol. ADP is bound by residues Thr-277, Gly-321, Gly-421, and Asn-425. ATP is bound by residues Thr-277, Gly-321, and Gly-421.

It belongs to the FGGY kinase family.

It catalyses the reaction glycerol + ATP = sn-glycerol 3-phosphate + ADP + H(+). Its pathway is polyol metabolism; glycerol degradation via glycerol kinase pathway; sn-glycerol 3-phosphate from glycerol: step 1/1. In terms of biological role, key enzyme in the regulation of glycerol uptake and metabolism. Catalyzes the phosphorylation of glycerol to yield sn-glycerol 3-phosphate. The sequence is that of Glycerol kinase from Haloarcula marismortui (strain ATCC 43049 / DSM 3752 / JCM 8966 / VKM B-1809) (Halobacterium marismortui).